A 325-amino-acid polypeptide reads, in one-letter code: Pyruvate dehydrogenase E1 component subunit beta (325 aa).

Glu59 is a thiamine diphosphate binding site.

In terms of assembly, heterodimer of an alpha and a beta chain. Thiamine diphosphate serves as cofactor.

The catalysed reaction is N(6)-[(R)-lipoyl]-L-lysyl-[protein] + pyruvate + H(+) = N(6)-[(R)-S(8)-acetyldihydrolipoyl]-L-lysyl-[protein] + CO2. The pyruvate dehydrogenase complex catalyzes the overall conversion of pyruvate to acetyl-CoA and CO(2). It contains multiple copies of three enzymatic components: pyruvate dehydrogenase (E1), dihydrolipoamide acetyltransferase (E2) and lipoamide dehydrogenase (E3). This is Pyruvate dehydrogenase E1 component subunit beta (pdhB) from Rickettsia bellii (strain RML369-C).